A 104-amino-acid polypeptide reads, in one-letter code: uncharacterized protein (104 aa).

Homodimer.

This is an uncharacterized protein from Bacillus subtilis (strain 168).